The following is a 458-amino-acid chain: tRNA modification GTPase MnmE (458 aa).

The (6S)-5-formyl-5,6,7,8-tetrahydrofolate site is built by R22, E84, and R123. The TrmE-type G domain maps to 220–379; sequence GIATAIIGRP…LEKAIADLFF (160 aa). N230 serves as a coordination point for K(+). GTP is bound by residues 230–235, 249–255, and 274–277; these read NVGKSS, TDIAGTT, and DTAG. S234 provides a ligand contact to Mg(2+). Residues T249, I251, and T254 each coordinate K(+). T255 contacts Mg(2+). K458 is a (6S)-5-formyl-5,6,7,8-tetrahydrofolate binding site.

This sequence belongs to the TRAFAC class TrmE-Era-EngA-EngB-Septin-like GTPase superfamily. TrmE GTPase family. As to quaternary structure, homodimer. Heterotetramer of two MnmE and two MnmG subunits. The cofactor is K(+).

The protein resides in the cytoplasm. In terms of biological role, exhibits a very high intrinsic GTPase hydrolysis rate. Involved in the addition of a carboxymethylaminomethyl (cmnm) group at the wobble position (U34) of certain tRNAs, forming tRNA-cmnm(5)s(2)U34. This is tRNA modification GTPase MnmE from Bacillus thuringiensis (strain Al Hakam).